The following is a 313-amino-acid chain: UDP-glucose 4-epimerase (313 aa).

Residues 11–12 (FI), 31–36 (DDLSSG), 56–57 (DI), and 77–81 (LAAQI) contribute to the NAD(+) site. The substrate site is built by Ser-121 and Tyr-146. NAD(+) contacts are provided by Tyr-146 and Lys-150. The active-site Proton acceptor is Tyr-146. Substrate-binding positions include Asn-175, 189–190 (VV), 204–206 (KIF), Arg-213, and 271–274 (RLGD).

Belongs to the NAD(P)-dependent epimerase/dehydratase family. Homodimer. It depends on NAD(+) as a cofactor.

The catalysed reaction is UDP-alpha-D-glucose = UDP-alpha-D-galactose. The protein operates within carbohydrate metabolism; galactose metabolism. Involved in the metabolism of galactose. Catalyzes the conversion of UDP-galactose (UDP-Gal) to UDP-glucose (UDP-Glc) through a mechanism involving the transient reduction of NAD. This chain is UDP-glucose 4-epimerase, found in Mycolicibacterium smegmatis (strain ATCC 700084 / mc(2)155) (Mycobacterium smegmatis).